An 898-amino-acid polypeptide reads, in one-letter code: Serine/threonine-protein kinase TAO3 (898 aa).

A Protein kinase domain is found at 24 to 277 (FIDLHEIGHG…AVELLRHDFI (254 aa)). ATP contacts are provided by residues 30–38 (IGHGSFGAV) and Lys-53. Asp-147 acts as the Proton acceptor in catalysis. Disordered stretches follow at residues 316 to 375 (TRNG…DESS) and 405 to 424 (DEAG…SVQS). Phosphoserine; by ATM is present on Ser-324. 3 positions are modified to phosphoserine: Ser-343, Ser-346, and Ser-349. The span at 349 to 366 (SIPSTSVSTGSRSSSVNS) shows a compositional bias: low complexity. Thr-357 carries the phosphothreonine modification. At Ser-359 the chain carries Phosphoserine. A compositionally biased stretch (basic and acidic residues) spans 405-416 (DEAGHGDPRPEP). Ser-442 is subject to Phosphoserine. 3 coiled-coil regions span residues 452–502 (EQEN…THAN), 548–649 (FLES…HAML), and 754–871 (LKTL…QERE). The segment at 565 to 596 (EEMNEDHSTPKKEKQERISKHKENLQHTQAEE) is disordered. Lys-830 is modified (N6-acetyllysine).

This sequence belongs to the protein kinase superfamily. STE Ser/Thr protein kinase family. STE20 subfamily. Self-associates. Interacts with ERN1 and TRAF2. Interaction with TRAF2 is facilitated under ER stress conditions, such as treatment with tunicamycin, and may promote TRAF2 phosphorylation. Interacts (via N-terminus) with STK25; the interaction promotes STK25 abundance at the level of protein expression and/or stability. In terms of processing, autophosphorylated. Phosphorylation at Ser-324 by ATM following DNA damage is required for activation of the p38/MAPK14 stress-activated MAPK cascade. Phosphorylated at Ser-324 and on Tyr residues during T cell activation. Phosphorylated by LRRK2.

The protein localises to the cytoplasm. The protein resides in the cell membrane. It localises to the membrane raft. Its subcellular location is the lipid droplet. The catalysed reaction is L-seryl-[protein] + ATP = O-phospho-L-seryl-[protein] + ADP + H(+). It catalyses the reaction L-threonyl-[protein] + ATP = O-phospho-L-threonyl-[protein] + ADP + H(+). In terms of biological role, serine/threonine-protein kinase that acts as a regulator of the p38/MAPK14 stress-activated MAPK cascade and of the MAPK8/JNK cascade. In response to DNA damage, involved in the G2/M transition DNA damage checkpoint by activating the p38/MAPK14 stress-activated MAPK cascade, probably by mediating phosphorylation of upstream MAP2K3 and MAP2K6 kinases. Inhibits basal activity of the MAPK8/JNK cascade and diminishes its activation in response to epidermal growth factor (EGF). Positively regulates canonical T cell receptor (TCR) signaling by preventing early PTPN6/SHP1-mediated inactivation of LCK, ensuring sustained TCR signaling that is required for optimal activation and differentiation of T cells. Phosphorylates PTPN6/SHP1 on 'Thr-394', leading to its polyubiquitination and subsequent proteasomal degradation. Required for cell surface expression of metalloprotease ADAM10 on type 1 transitional B cells which is necessary for their NOTCH-mediated development into marginal zone B cells. Also required for the NOTCH-mediated terminal differentiation of splenic conventional type 2 dendritic cells. Positively regulates osteoblast differentiation by acting as an upstream activator of the JNK pathway. Promotes JNK signaling in hepatocytes and positively regulates hepatocyte lipid storage by inhibiting beta-oxidation and triacylglycerol secretion while enhancing lipid synthesis. Restricts age-associated inflammation by negatively regulating differentiation of macrophages and their production of pro-inflammatory cytokines. Plays a role in negatively regulating the abundance of regulatory T cells in white adipose tissue. The protein is Serine/threonine-protein kinase TAO3 (Taok3) of Mus musculus (Mouse).